The sequence spans 206 residues: Pyridoxine/pyridoxamine 5'-phosphate oxidase (206 aa).

FMN contacts are provided by residues 53–58, 68–69, Lys75, and Gln97; these read RMVLLK and YT. Lys58 is a binding site for substrate. Positions 115, 119, and 123 each coordinate substrate. Residues 132–133 and Trp177 contribute to the FMN site; that span reads QS. 183 to 185 contacts substrate; sequence RLH. Residue Arg187 participates in FMN binding.

It belongs to the pyridoxamine 5'-phosphate oxidase family. In terms of assembly, homodimer. It depends on FMN as a cofactor.

The enzyme catalyses pyridoxamine 5'-phosphate + O2 + H2O = pyridoxal 5'-phosphate + H2O2 + NH4(+). It catalyses the reaction pyridoxine 5'-phosphate + O2 = pyridoxal 5'-phosphate + H2O2. It functions in the pathway cofactor metabolism; pyridoxal 5'-phosphate salvage; pyridoxal 5'-phosphate from pyridoxamine 5'-phosphate: step 1/1. It participates in cofactor metabolism; pyridoxal 5'-phosphate salvage; pyridoxal 5'-phosphate from pyridoxine 5'-phosphate: step 1/1. Its function is as follows. Catalyzes the oxidation of either pyridoxine 5'-phosphate (PNP) or pyridoxamine 5'-phosphate (PMP) into pyridoxal 5'-phosphate (PLP). This is Pyridoxine/pyridoxamine 5'-phosphate oxidase from Rhizobium johnstonii (strain DSM 114642 / LMG 32736 / 3841) (Rhizobium leguminosarum bv. viciae).